Here is a 630-residue protein sequence, read N- to C-terminus: Telomere repeat-binding protein 5 (630 aa).

Disordered regions lie at residues 1–38 (MVLQ…SENH), 56–78 (EGGN…CAVK), and 308–327 (YTAS…GSPR). Low complexity predominate over residues 57–71 (GGNSSSSSNNTSGNN). A compositionally biased stretch (polar residues) spans 309 to 325 (TASQSEETNKNEGQSGS). The Ubiquitin-like domain maps to 354-433 (VKLGIKSFRV…SDTLGFCLEP (80 aa)). The interval 463-489 (LPSPGKHAKPSNSVESDLDSKPSAPNR) is disordered. The 60-residue stretch at 523–582 (AQRRIRRPFSVAEVEALVQAVERLGTGRWRDVKLRAFDNAKHRTYVDLKDKWKTLVHTAR) folds into the HTH myb-type domain. Residues 551 to 578 (WRDVKLRAFDNAKHRTYVDLKDKWKTLV) constitute a DNA-binding region (H-T-H motif).

Homodimer. As to expression, expressed ubiquitously.

It is found in the nucleus. In terms of biological role, binds specifically to the plant telomeric double-stranded DNA sequences. At least 6 repeats of telomeric sequences are required for binding. In Arabidopsis thaliana (Mouse-ear cress), this protein is Telomere repeat-binding protein 5 (TRP5).